The primary structure comprises 356 residues: UDP-N-acetylglucosamine--N-acetylmuramyl-(pentapeptide) pyrophosphoryl-undecaprenol N-acetylglucosamine transferase (356 aa).

UDP-N-acetyl-alpha-D-glucosamine contacts are provided by residues 12–14 (TGG), N124, R163, S188, I242, and Q287.

This sequence belongs to the glycosyltransferase 28 family. MurG subfamily.

The protein localises to the cell inner membrane. It carries out the reaction di-trans,octa-cis-undecaprenyl diphospho-N-acetyl-alpha-D-muramoyl-L-alanyl-D-glutamyl-meso-2,6-diaminopimeloyl-D-alanyl-D-alanine + UDP-N-acetyl-alpha-D-glucosamine = di-trans,octa-cis-undecaprenyl diphospho-[N-acetyl-alpha-D-glucosaminyl-(1-&gt;4)]-N-acetyl-alpha-D-muramoyl-L-alanyl-D-glutamyl-meso-2,6-diaminopimeloyl-D-alanyl-D-alanine + UDP + H(+). Its pathway is cell wall biogenesis; peptidoglycan biosynthesis. Functionally, cell wall formation. Catalyzes the transfer of a GlcNAc subunit on undecaprenyl-pyrophosphoryl-MurNAc-pentapeptide (lipid intermediate I) to form undecaprenyl-pyrophosphoryl-MurNAc-(pentapeptide)GlcNAc (lipid intermediate II). This chain is UDP-N-acetylglucosamine--N-acetylmuramyl-(pentapeptide) pyrophosphoryl-undecaprenol N-acetylglucosamine transferase, found in Pseudomonas savastanoi pv. phaseolicola (strain 1448A / Race 6) (Pseudomonas syringae pv. phaseolicola (strain 1448A / Race 6)).